A 219-amino-acid polypeptide reads, in one-letter code: Elongation factor Ts (219 aa).

The segment at 82 to 85 (TDFV) is involved in Mg(2+) ion dislocation from EF-Tu.

The protein belongs to the EF-Ts family.

Its subcellular location is the cytoplasm. Associates with the EF-Tu.GDP complex and induces the exchange of GDP to GTP. It remains bound to the aminoacyl-tRNA.EF-Tu.GTP complex up to the GTP hydrolysis stage on the ribosome. In Anaeromyxobacter sp. (strain Fw109-5), this protein is Elongation factor Ts.